The following is a 792-amino-acid chain: uncharacterized protein (792 aa).

W361–D362 is a substrate binding site. Residue E488 is the Proton donor of the active site. K590–Q591 contacts substrate. The disordered stretch occupies residues D753 to R792. The segment covering L766–R776 has biased composition (pro residues).

This sequence belongs to the glycosyl hydrolase 65 family.

This is an uncharacterized protein from Mycobacterium leprae (strain TN).